A 130-amino-acid chain; its full sequence is Large ribosomal subunit protein bL19 (130 aa).

This sequence belongs to the bacterial ribosomal protein bL19 family.

In terms of biological role, this protein is located at the 30S-50S ribosomal subunit interface and may play a role in the structure and function of the aminoacyl-tRNA binding site. In Burkholderia vietnamiensis (strain G4 / LMG 22486) (Burkholderia cepacia (strain R1808)), this protein is Large ribosomal subunit protein bL19.